A 208-amino-acid polypeptide reads, in one-letter code: N-(5'-phosphoribosyl)anthranilate isomerase (208 aa).

This sequence belongs to the TrpF family.

It carries out the reaction N-(5-phospho-beta-D-ribosyl)anthranilate = 1-(2-carboxyphenylamino)-1-deoxy-D-ribulose 5-phosphate. Its pathway is amino-acid biosynthesis; L-tryptophan biosynthesis; L-tryptophan from chorismate: step 3/5. This Neisseria meningitidis serogroup A / serotype 4A (strain DSM 15465 / Z2491) protein is N-(5'-phosphoribosyl)anthranilate isomerase.